We begin with the raw amino-acid sequence, 313 residues long: Ribonuclease HIII (313 aa).

Positions 94–310 constitute an RNase H type-2 domain; the sequence is MSVIGSDEVG…TQKAKRLVER (217 aa). Positions 100, 101, and 205 each coordinate a divalent metal cation.

It belongs to the RNase HII family. RnhC subfamily. Mn(2+) serves as cofactor. Mg(2+) is required as a cofactor.

The protein localises to the cytoplasm. It carries out the reaction Endonucleolytic cleavage to 5'-phosphomonoester.. In terms of biological role, endonuclease that specifically degrades the RNA of RNA-DNA hybrids. The protein is Ribonuclease HIII of Bacillus velezensis (strain DSM 23117 / BGSC 10A6 / LMG 26770 / FZB42) (Bacillus amyloliquefaciens subsp. plantarum).